The following is a 269-amino-acid chain: 3-ketodihydrosphingosine reductase (269 aa).

6 residues coordinate NADPH: Gly-10, Ser-12, Ser-13, Gly-14, Lys-36, and Asp-50. A GXSXG motif is present at residues 10–14; it reads GASSG. The active-site Nucleophile; for lipase activity is the Ser-12. Residue Ser-128 is the Proton donor of the active site. Tyr-142 functions as the Proton acceptor in the catalytic mechanism. Positions 142 and 146 each coordinate NADP(+). NADPH is bound by residues 142 to 146 and 175 to 177; these read YSASK and FNT. The active site involves Lys-146. The active-site Lowers pKa of active site Tyr is the Lys-146.

The protein belongs to the short-chain dehydrogenases/reductases (SDR) family.

It carries out the reaction sphinganine + NADP(+) = 3-oxosphinganine + NADPH + H(+). It functions in the pathway lipid metabolism; sphingolipid metabolism. Functionally, catalyzes the reduction of 3'-oxosphinganine (3-ketodihydrosphingosine/KDS) to sphinganine (dihydrosphingosine/DHS), the second step of de novo sphingolipid biosynthesis. The sequence is that of 3-ketodihydrosphingosine reductase from Bacteroides thetaiotaomicron (strain ATCC 29148 / DSM 2079 / JCM 5827 / CCUG 10774 / NCTC 10582 / VPI-5482 / E50).